A 364-amino-acid polypeptide reads, in one-letter code: tRNA-specific 2-thiouridylase MnmA 1 (364 aa).

ATP contacts are provided by residues 10 to 17 (GMSGGVDS) and M36. The active-site Nucleophile is the C106. Residues C106 and C204 are joined by a disulfide bond. G130 lines the ATP pocket. The segment at 154-156 (KDQ) is interaction with tRNA. C204 acts as the Cysteine persulfide intermediate in catalysis. The tract at residues 310-311 (RY) is interaction with tRNA.

It belongs to the MnmA/TRMU family.

The protein resides in the cytoplasm. The enzyme catalyses S-sulfanyl-L-cysteinyl-[protein] + uridine(34) in tRNA + AH2 + ATP = 2-thiouridine(34) in tRNA + L-cysteinyl-[protein] + A + AMP + diphosphate + H(+). Its function is as follows. Catalyzes the 2-thiolation of uridine at the wobble position (U34) of tRNA, leading to the formation of s(2)U34. The polypeptide is tRNA-specific 2-thiouridylase MnmA 1 (Thermoanaerobacter sp. (strain X514)).